Here is a 249-residue protein sequence, read N- to C-terminus: Pleckstrin homology domain-containing family F member 2 (249 aa).

At S16 the chain carries Phosphoserine. Residues V35–T131 enclose the PH domain. The residue at position 44 (K44) is an N6-acetyllysine. The FYVE-type zinc-finger motif lies at D152–S212. 8 residues coordinate Zn(2+): C158, C161, C175, C178, C183, C186, C204, and C207. Polar residues predominate over residues P221 to S233. Positions P221–D249 are disordered. The segment covering M238–D249 has biased composition (acidic residues). Residues S239 and S248 each carry the phosphoserine modification.

In terms of assembly, may interact with EEA1. Expressed in placenta, ovary and small intestine, as well as in heart and pancreas. Also expressed in peripheral blood mononuclear cells and dendritic cells.

Its subcellular location is the early endosome membrane. The protein localises to the endoplasmic reticulum. Functionally, may play a role in early endosome fusion upstream of RAB5, hence regulating receptor trafficking and fluid-phase transport. Enhances cellular sensitivity to TNF-induced apoptosis. This is Pleckstrin homology domain-containing family F member 2 (PLEKHF2) from Homo sapiens (Human).